Here is a 415-residue protein sequence, read N- to C-terminus: Serine--tRNA ligase (415 aa).

231 to 233 is a binding site for L-serine; that stretch reads TAE. An ATP-binding site is contributed by 262-264; it reads RSE. L-serine is bound at residue glutamate 285. An ATP-binding site is contributed by 349 to 352; the sequence is EISS. Serine 383 serves as a coordination point for L-serine.

The protein belongs to the class-II aminoacyl-tRNA synthetase family. Type-1 seryl-tRNA synthetase subfamily. As to quaternary structure, homodimer. The tRNA molecule binds across the dimer.

It is found in the cytoplasm. The catalysed reaction is tRNA(Ser) + L-serine + ATP = L-seryl-tRNA(Ser) + AMP + diphosphate + H(+). The enzyme catalyses tRNA(Sec) + L-serine + ATP = L-seryl-tRNA(Sec) + AMP + diphosphate + H(+). It participates in aminoacyl-tRNA biosynthesis; selenocysteinyl-tRNA(Sec) biosynthesis; L-seryl-tRNA(Sec) from L-serine and tRNA(Sec): step 1/1. Catalyzes the attachment of serine to tRNA(Ser). Is also able to aminoacylate tRNA(Sec) with serine, to form the misacylated tRNA L-seryl-tRNA(Sec), which will be further converted into selenocysteinyl-tRNA(Sec). The sequence is that of Serine--tRNA ligase from Helicobacter pylori (strain HPAG1).